The chain runs to 331 residues: Adenosine deaminase (331 aa).

Zn(2+) is bound by residues H12 and H14. Substrate contacts are provided by H14, D16, and G170. Residue H197 participates in Zn(2+) binding. E200 functions as the Proton donor in the catalytic mechanism. A Zn(2+)-binding site is contributed by D278. D279 contributes to the substrate binding site.

The protein belongs to the metallo-dependent hydrolases superfamily. Adenosine and AMP deaminases family. Adenosine deaminase subfamily. It depends on Zn(2+) as a cofactor.

It carries out the reaction adenosine + H2O + H(+) = inosine + NH4(+). The enzyme catalyses 2'-deoxyadenosine + H2O + H(+) = 2'-deoxyinosine + NH4(+). Functionally, catalyzes the hydrolytic deamination of adenosine and 2-deoxyadenosine. This chain is Adenosine deaminase, found in Shewanella sp. (strain MR-7).